A 281-amino-acid polypeptide reads, in one-letter code: Eukaryotic translation initiation factor 3 subunit G (281 aa).

Positions 1–32 are disordered; it reads MSRPAGRTDWAEEDDETELALPSQTVVKNKDG. The region spanning 202 to 280 is the RRM domain; that stretch reads ATLRVTNVSE…LILRVEFAKK (79 aa).

This sequence belongs to the eIF-3 subunit G family. As to quaternary structure, component of the eukaryotic translation initiation factor 3 (eIF-3) complex.

The protein localises to the cytoplasm. In terms of biological role, RNA-binding component of the eukaryotic translation initiation factor 3 (eIF-3) complex, which is involved in protein synthesis of a specialized repertoire of mRNAs and, together with other initiation factors, stimulates binding of mRNA and methionyl-tRNAi to the 40S ribosome. The eIF-3 complex specifically targets and initiates translation of a subset of mRNAs involved in cell proliferation. This subunit can bind 18S rRNA. This chain is Eukaryotic translation initiation factor 3 subunit G, found in Phaeosphaeria nodorum (strain SN15 / ATCC MYA-4574 / FGSC 10173) (Glume blotch fungus).